The chain runs to 257 residues: 1-(5-phosphoribosyl)-5-[(5-phosphoribosylamino)methylideneamino] imidazole-4-carboxamide isomerase (257 aa).

Asp-8 acts as the Proton acceptor in catalysis. Catalysis depends on Asp-129, which acts as the Proton donor.

Belongs to the HisA/HisF family.

It localises to the cytoplasm. It catalyses the reaction 1-(5-phospho-beta-D-ribosyl)-5-[(5-phospho-beta-D-ribosylamino)methylideneamino]imidazole-4-carboxamide = 5-[(5-phospho-1-deoxy-D-ribulos-1-ylimino)methylamino]-1-(5-phospho-beta-D-ribosyl)imidazole-4-carboxamide. It functions in the pathway amino-acid biosynthesis; L-histidine biosynthesis; L-histidine from 5-phospho-alpha-D-ribose 1-diphosphate: step 4/9. This Cyanothece sp. (strain PCC 7425 / ATCC 29141) protein is 1-(5-phosphoribosyl)-5-[(5-phosphoribosylamino)methylideneamino] imidazole-4-carboxamide isomerase.